Consider the following 449-residue polypeptide: GTPase Der (449 aa).

EngA-type G domains are found at residues 4-174 and 183-358; these read PIVA…PPKT and LRVA…AQRQ. Residues 10 to 17, 57 to 61, 126 to 129, 189 to 196, 236 to 240, and 301 to 304 each bind GTP; these read GRPNVGKS, DTAGL, NKCD, DTAGI, and NKWD. Residues 359–444 form the KH-like domain; that stretch reads KRIPTSELNN…PIVIVFRSRE (86 aa).

It belongs to the TRAFAC class TrmE-Era-EngA-EngB-Septin-like GTPase superfamily. EngA (Der) GTPase family. As to quaternary structure, associates with the 50S ribosomal subunit.

Functionally, GTPase that plays an essential role in the late steps of ribosome biogenesis. The polypeptide is GTPase Der (Chloroflexus aggregans (strain MD-66 / DSM 9485)).